Consider the following 69-residue polypeptide: Large ribosomal subunit protein uL29 (69 aa).

It belongs to the universal ribosomal protein uL29 family.

This Granulibacter bethesdensis (strain ATCC BAA-1260 / CGDNIH1) protein is Large ribosomal subunit protein uL29.